We begin with the raw amino-acid sequence, 876 residues long: Valine--tRNA ligase (876 aa).

Positions 44-54 (PNVTGKLHLGH) match the 'HIGH' region motif. A 'KMSKS' region motif is present at residues 520-524 (KMSKS). ATP is bound at residue Lys-523. Residues 806 to 876 (EGLIDMDKEI…VKLRINQLKA (71 aa)) are a coiled coil.

This sequence belongs to the class-I aminoacyl-tRNA synthetase family. ValS type 1 subfamily. In terms of assembly, monomer.

It is found in the cytoplasm. The enzyme catalyses tRNA(Val) + L-valine + ATP = L-valyl-tRNA(Val) + AMP + diphosphate. Functionally, catalyzes the attachment of valine to tRNA(Val). As ValRS can inadvertently accommodate and process structurally similar amino acids such as threonine, to avoid such errors, it has a 'posttransfer' editing activity that hydrolyzes mischarged Thr-tRNA(Val) in a tRNA-dependent manner. This Staphylococcus saprophyticus subsp. saprophyticus (strain ATCC 15305 / DSM 20229 / NCIMB 8711 / NCTC 7292 / S-41) protein is Valine--tRNA ligase.